A 573-amino-acid chain; its full sequence is 2-isopropylmalate synthase (573 aa).

In terms of domain architecture, Pyruvate carboxyltransferase spans 37 to 314 (PRWLSTDLRD…DPQIDFSDID (278 aa)). Mg(2+)-binding residues include Asp-46, His-253, His-255, and Asn-289. The tract at residues 456–573 (NPDNPWGRIQ…VVSAVNRATR (118 aa)) is regulatory domain.

It belongs to the alpha-IPM synthase/homocitrate synthase family. LeuA type 2 subfamily. Homodimer. Mg(2+) is required as a cofactor.

It is found in the cytoplasm. It carries out the reaction 3-methyl-2-oxobutanoate + acetyl-CoA + H2O = (2S)-2-isopropylmalate + CoA + H(+). It participates in amino-acid biosynthesis; L-leucine biosynthesis; L-leucine from 3-methyl-2-oxobutanoate: step 1/4. Its function is as follows. Catalyzes the condensation of the acetyl group of acetyl-CoA with 3-methyl-2-oxobutanoate (2-ketoisovalerate) to form 3-carboxy-3-hydroxy-4-methylpentanoate (2-isopropylmalate). This chain is 2-isopropylmalate synthase, found in Streptomyces coelicolor (strain ATCC BAA-471 / A3(2) / M145).